The chain runs to 993 residues: Type II inositol 1,4,5-trisphosphate 5-phosphatase (993 aa).

Residues 22–148 (QGVLCKGDSR…PEFEWLSRHT (127 aa)) enclose the PH domain. Basic and acidic residues-rich tracts occupy residues 149 to 163 (CAEP…REWN) and 294 to 303 (SKSDMSEKVR). 2 disordered regions span residues 149–191 (CAEP…GLED) and 236–304 (EALE…KVRS). Positions 342 to 668 (IQNFRFFVGT…LDKMENANIP (327 aa)) are 5-phosphatase. Mg(2+) is bound by residues N355 and E383. Substrate-binding positions include E383, 459-460 (NK), 582-583 (YK), and 596-598 (KCR). Residues 669–782 (SVTLSKREFC…LSVSGNYLPS (114 aa)) form an ASH region. The Rho-GAP domain occupies 821 to 993 (SQLENPMEIP…FIHQFLCGPL (173 aa)). C990 bears the Cysteine methyl ester mark. The S-farnesyl cysteine moiety is linked to residue C990. Positions 991 to 993 (GPL) are cleaved as a propeptide — removed in mature form.

It belongs to the inositol 1,4,5-trisphosphate 5-phosphatase type II family. As to quaternary structure, interacts with APPL1, PHETA1 and PHETA2. Interacts with several Rab GTPases, at least RAB1A, RAB2A, RAB5A, RAB6A, RAB8A, RAB9A and RAB33B; these interactions may play a dual role in targeting INPP5B to the specific membranes and stimulating its phosphatase activity. Interacts preferentially with non-phosphorylated RAB8A; phosphorylation of RAB8A on 'Thr-72' disrupts this interaction. Interacts with INPP5F. Isoprenylation at Cys-990 may be required for localization at the membrane. In terms of processing, may be proteolytically cleaved after Lys-320 as inferred from N-terminal protein sequence of the 75 kda form. In terms of tissue distribution, detected in kidney, liver, brain, lung and testis (at protein level). Detected in kidney and liver, and at lower levels in brain, lung and testis.

Its subcellular location is the cytoplasm. The protein resides in the cytosol. The protein localises to the endoplasmic reticulum-Golgi intermediate compartment. It localises to the early endosome membrane. It is found in the membrane. Its subcellular location is the cytoplasmic vesicle. The protein resides in the phagosome membrane. The catalysed reaction is a 1,2-diacyl-sn-glycero-3-phospho-(1D-myo-inositol-4,5-bisphosphate) + H2O = a 1,2-diacyl-sn-glycero-3-phospho-(1D-myo-inositol 4-phosphate) + phosphate. Its function is as follows. Hydrolyzes phosphatidylinositol 4,5-bisphosphate (PtIns(4,5)P2) and the signaling molecule phosphatidylinositol 1,4,5-trisphosphate (PtIns(1,4,5)P3), and thereby modulates cellular signaling events. This is Type II inositol 1,4,5-trisphosphate 5-phosphatase (Inpp5b) from Mus musculus (Mouse).